Here is a 414-residue protein sequence, read N- to C-terminus: Signal recognition particle receptor FtsY (414 aa).

GTP-binding positions include 216-223, 298-302, and 362-365; these read GVNGVGKT, DTAGR, and TKLD.

It belongs to the GTP-binding SRP family. FtsY subfamily. As to quaternary structure, part of the signal recognition particle protein translocation system, which is composed of SRP and FtsY. SRP is a ribonucleoprotein composed of Ffh and a 4.5S RNA molecule.

It is found in the cell inner membrane. The protein localises to the cytoplasm. It carries out the reaction GTP + H2O = GDP + phosphate + H(+). In terms of biological role, involved in targeting and insertion of nascent membrane proteins into the cytoplasmic membrane. Acts as a receptor for the complex formed by the signal recognition particle (SRP) and the ribosome-nascent chain (RNC). Interaction with SRP-RNC leads to the transfer of the RNC complex to the Sec translocase for insertion into the membrane, the hydrolysis of GTP by both Ffh and FtsY, and the dissociation of the SRP-FtsY complex into the individual components. This is Signal recognition particle receptor FtsY from Haemophilus influenzae (strain ATCC 51907 / DSM 11121 / KW20 / Rd).